The following is a 254-amino-acid chain: Proteasome subunit alpha (254 aa).

Residues 234 to 254 form a disordered region; that stretch reads EEMLPTPAATEDAPANGDAPS.

It belongs to the peptidase T1A family. The 20S proteasome core is composed of 14 alpha and 14 beta subunits that assemble into four stacked heptameric rings, resulting in a barrel-shaped structure. The two inner rings, each composed of seven catalytic beta subunits, are sandwiched by two outer rings, each composed of seven alpha subunits. The catalytic chamber with the active sites is on the inside of the barrel. Has a gated structure, the ends of the cylinder being occluded by the N-termini of the alpha-subunits. Is capped by the proteasome-associated ATPase, ARC.

The protein localises to the cytoplasm. It functions in the pathway protein degradation; proteasomal Pup-dependent pathway. With respect to regulation, the formation of the proteasomal ATPase ARC-20S proteasome complex, likely via the docking of the C-termini of ARC into the intersubunit pockets in the alpha-rings, may trigger opening of the gate for substrate entry. Interconversion between the open-gate and close-gate conformations leads to a dynamic regulation of the 20S proteasome proteolysis activity. In terms of biological role, component of the proteasome core, a large protease complex with broad specificity involved in protein degradation. In Rhodococcus erythropolis (strain PR4 / NBRC 100887), this protein is Proteasome subunit alpha.